The following is a 297-amino-acid chain: Cell division protein ZipA (297 aa).

A topological domain (periplasmic) is located at residue Met1. A helical membrane pass occupies residues 2-22 (EIGLREWLILIGIIVIAGILF). Topologically, residues 23–297 (DGWRRMRGGK…FERRALTQKR (275 aa)) are cytoplasmic. Positions 48-150 (DEEGGSAEVL…GAAPASSSVK (103 aa)) are disordered. A compositionally biased stretch (basic and acidic residues) spans 83 to 92 (ARDREREPKP). Positions 124–133 (LFADSDDDFA) are enriched in acidic residues. A compositionally biased stretch (polar residues) spans 136-149 (NNRSSGAAPASSSV).

This sequence belongs to the ZipA family. Interacts with FtsZ via their C-terminal domains.

The protein resides in the cell inner membrane. Functionally, essential cell division protein that stabilizes the FtsZ protofilaments by cross-linking them and that serves as a cytoplasmic membrane anchor for the Z ring. Also required for the recruitment to the septal ring of downstream cell division proteins. In Pseudomonas putida (strain ATCC 700007 / DSM 6899 / JCM 31910 / BCRC 17059 / LMG 24140 / F1), this protein is Cell division protein ZipA.